A 292-amino-acid polypeptide reads, in one-letter code: Coiled-coil domain-containing protein 192 (292 aa).

A disordered region spans residues 28 to 55; the sequence is SVVPESDTSERSSMTSGSSESDIPQENK. The span at 38 to 49 shows a compositional bias: low complexity; sequence RSSMTSGSSESD. 2 coiled-coil regions span residues 65-174 and 222-258; these read QMAF…LATA and IMELSTQVSLQTERITQLKEVLEEKERKIQQLEAERS. The span at 251-267 shows a compositional bias: basic and acidic residues; the sequence is QQLEAERSPHPPQEVKD. The segment at 251 to 292 is disordered; that stretch reads QQLEAERSPHPPQEVKDPPGCLPEAPVFSTHDIPPVVSDENL.

This chain is Coiled-coil domain-containing protein 192, found in Homo sapiens (Human).